The following is a 976-amino-acid chain: Vacuolar membrane protease (976 aa).

Topologically, residues 1–15 (MKLKSVFRSVLKYRK) are cytoplasmic. A helical transmembrane segment spans residues 16-36 (TNLSLLLLITYSIITLLYIFD). At 37 to 359 (HERYKLNLPK…KFFVISAKTL (323 aa)) the chain is on the vacuolar side. N-linked (GlcNAc...) asparagine glycosylation is found at Asn96 and Asn121. Positions 156 and 168 each coordinate Zn(2+). Residue Asn189 is glycosylated (N-linked (GlcNAc...) asparagine). The Proton acceptor role is filled by Glu200. Glu201 is a binding site for Zn(2+). N-linked (GlcNAc...) asparagine glycosylation is found at Asn212 and Asn217. Positions 226 and 300 each coordinate Zn(2+). The chain crosses the membrane as a helical span at residues 360–380 (FYWNCIFLLVSPVVAIGLYLI). Over 381–392 (SRDRMTWKSHSW) the chain is Cytoplasmic. The chain crosses the membrane as a helical span at residues 393–412 (LSWTRFPLSLAAGIIVQKLF). Residues 413–428 (SNDIIRSNPLTFSRNY) lie on the Vacuolar side of the membrane. The chain crosses the membrane as a helical span at residues 429–449 (FWPISAFFTQVIFTSYVLINC). The Cytoplasmic portion of the chain corresponds to 450–461 (SNFFFPCADMKS). Residues 462–482 (LSIIELFIILWTILLFTSKLL) form a helical membrane-spanning segment. At 483–496 (YSSDYRYTGLYPLS) the chain is on the vacuolar side. A helical membrane pass occupies residues 497–517 (IFFLLSTIAAILRLLALALGM). Residues 518 to 627 (RTRKRLGREC…NSLKLEYTDY (110 aa)) are Cytoplasmic-facing. The tract at residues 528 to 610 (RDHHSNYSSH…PLLKGSNSME (83 aa)) is disordered. Polar residues predominate over residues 549–558 (NLEQPQDQFT). Low complexity predominate over residues 559–570 (SSQDDQASIQDD). A compositionally biased stretch (basic and acidic residues) spans 582–601 (NVDEDHGMDSSSQQHDERVP). A helical membrane pass occupies residues 628–648 (AWIIQFLLIVPIPSFILFNSV). Residues 649–668 (DVIMDALNHTVQEGSKATFD) lie on the Vacuolar side of the membrane. A glycan (N-linked (GlcNAc...) asparagine) is linked at Asn656. A helical transmembrane segment spans residues 669–689 (VLRFGMVGSILMALPILPFFY). Residues 690-692 (KVN) are Cytoplasmic-facing. The helical transmembrane segment at 693–713 (YITISLTALLFLISASKTLLV) threads the bilayer. Residues 714–976 (HPFTNSNPLK…LVIVKDAIIL (263 aa)) lie on the Vacuolar side of the membrane. 5 N-linked (GlcNAc...) asparagine glycosylation sites follow: Asn768, Asn796, Asn811, Asn866, and Asn937.

Belongs to the peptidase M28 family. It depends on Zn(2+) as a cofactor.

It is found in the vacuole membrane. Functionally, may be involved in vacuolar sorting and osmoregulation. In Saccharomyces cerevisiae (strain AWRI1631) (Baker's yeast), this protein is Vacuolar membrane protease.